We begin with the raw amino-acid sequence, 636 residues long: DNA mismatch repair protein MutL (636 aa).

Residues 341–420 (APLINKPEQQ…PGAEEYTPEA (80 aa)) are disordered. Basic and acidic residues predominate over residues 348-358 (EQQKLDFDQVR).

The protein belongs to the DNA mismatch repair MutL/HexB family.

Its function is as follows. This protein is involved in the repair of mismatches in DNA. It is required for dam-dependent methyl-directed DNA mismatch repair. May act as a 'molecular matchmaker', a protein that promotes the formation of a stable complex between two or more DNA-binding proteins in an ATP-dependent manner without itself being part of a final effector complex. The protein is DNA mismatch repair protein MutL of Bacillus licheniformis (strain ATCC 14580 / DSM 13 / JCM 2505 / CCUG 7422 / NBRC 12200 / NCIMB 9375 / NCTC 10341 / NRRL NRS-1264 / Gibson 46).